We begin with the raw amino-acid sequence, 338 residues long: Cytosolic sulfotransferase 16 (338 aa).

Residue 81–86 (KTGTTW) coordinates 3'-phosphoadenylyl sulfate. Residue His-143 is the Proton acceptor of the active site. 3'-phosphoadenylyl sulfate is bound by residues Arg-165, Ser-173, Tyr-231, and 301 to 303 (RKG).

This sequence belongs to the sulfotransferase 1 family. In terms of tissue distribution, highly expressed in roots, stems and mature leaves. Low expression in young leaves and flowers. Barely detected in siliques.

It is found in the cytoplasm. It carries out the reaction (Z)-desulfoglucotropeolin + 3'-phosphoadenylyl sulfate = (Z)-glucotropeolin + adenosine 3',5'-bisphosphate + H(+). The catalysed reaction is (Z)-indolylmethyl desulfoglucosinolate + 3'-phosphoadenylyl sulfate = (Z)-glucobrassicin + adenosine 3',5'-bisphosphate + H(+). With respect to regulation, inhibited by phosphoadenosine 5'-phosphate (PAP). In terms of biological role, sulfotransferase that utilizes 3'-phospho-5'-adenylyl sulfate (PAPS) as sulfonate donor to catalyze the sulfate conjugation of desulfo-glucosinolates (dsGSs), the final step in the biosynthesis of the glucosinolate core structure. Substrate preference is desulfo-2-phenylethyl glucosinolate &gt; desulfo-indol-3-yl methyl glucosinolate &gt; desulfo-benzyl glucosinolate &gt; desulfo-6-methylthiohexyl glucosinolate &gt; desulfo-4-methylthiobutyl glucosinolate &gt; desulfo-3-methylthiopropyl glucosinolate &gt; desulfo-singrin &gt; desulfo-3-butenyl glucosinolate. This is Cytosolic sulfotransferase 16 (SOT16) from Arabidopsis thaliana (Mouse-ear cress).